We begin with the raw amino-acid sequence, 328 residues long: Tryptophan--tRNA ligase (328 aa).

ATP contacts are provided by residues 9–11 (QPS) and 17–18 (GN). The 'HIGH' region signature appears at 10-18 (PSGVITIGN). Asp132 serves as a coordination point for L-tryptophan. Residues 144-146 (GED), Ile183, and 192-196 (KMSKS) each bind ATP. Positions 192–196 (KMSKS) match the 'KMSKS' region motif.

Belongs to the class-I aminoacyl-tRNA synthetase family. In terms of assembly, homodimer.

The protein localises to the cytoplasm. It catalyses the reaction tRNA(Trp) + L-tryptophan + ATP = L-tryptophyl-tRNA(Trp) + AMP + diphosphate + H(+). Its activity is regulated as follows. Inhibited by indolmycin, a competitive inhibitor for tryptophan. Catalyzes the attachment of tryptophan to tRNA(Trp). This Geobacillus stearothermophilus (Bacillus stearothermophilus) protein is Tryptophan--tRNA ligase.